The primary structure comprises 274 residues: MAHYFVGDVQGCFTELQKVLEKVDFNPSQDELWAVGDLVARGPDSLATLRFFKSLGDSAKTVLGNHDLHLMAIHGKLKRDKPSDNLKALLKADDINELIDWLRQQPLMRELPEQQLIMTHAGVPPQWSLETLRQESALVSHALKQDDYLEALISQMYTDSAERWEPTALGIARLRFCINALTRMRYLYVDGHLNFDCKQPPQDCTDPQLRPWYEYTSPLRQSHTLVFGHWAALMGNVNDKKLKALDTGCCWGEHLTLWHLEKDQKITQKRLKKS.

Belongs to the Ap4A hydrolase family.

The catalysed reaction is P(1),P(4)-bis(5'-adenosyl) tetraphosphate + H2O = 2 ADP + 2 H(+). Functionally, hydrolyzes diadenosine 5',5'''-P1,P4-tetraphosphate to yield ADP. The chain is Bis(5'-nucleosyl)-tetraphosphatase, symmetrical from Shewanella putrefaciens (strain CN-32 / ATCC BAA-453).